Reading from the N-terminus, the 508-residue chain is Photosystem II CP47 reaction center protein (508 aa).

The next 6 helical transmembrane spans lie at 21 to 36 (SVHI…WAGS), 101 to 115 (IVFS…IWHW), 140 to 156 (GIHL…FGAF), 203 to 218 (IAAG…FHLS), 237 to 252 (VLSS…AFVV), and 457 to 472 (SFAL…HGAR).

Belongs to the PsbB/PsbC family. PsbB subfamily. PSII is composed of 1 copy each of membrane proteins PsbA, PsbB, PsbC, PsbD, PsbE, PsbF, PsbH, PsbI, PsbJ, PsbK, PsbL, PsbM, PsbT, PsbX, PsbY, PsbZ, Psb30/Ycf12, at least 3 peripheral proteins of the oxygen-evolving complex and a large number of cofactors. It forms dimeric complexes. The cofactor is Binds multiple chlorophylls. PSII binds additional chlorophylls, carotenoids and specific lipids..

The protein resides in the plastid. It localises to the chloroplast thylakoid membrane. Functionally, one of the components of the core complex of photosystem II (PSII). It binds chlorophyll and helps catalyze the primary light-induced photochemical processes of PSII. PSII is a light-driven water:plastoquinone oxidoreductase, using light energy to abstract electrons from H(2)O, generating O(2) and a proton gradient subsequently used for ATP formation. This chain is Photosystem II CP47 reaction center protein, found in Acorus calamus var. americanus (American sweet flag).